We begin with the raw amino-acid sequence, 117 residues long: Non-specific lipid-transfer protein Lac s 1 (117 aa).

A signal peptide spans 1-25 (MARMAMMILCVVLTCMVVATPYTEA). 4 disulfides stabilise this stretch: Cys29/Cys76, Cys39/Cys53, Cys54/Cys99, and Cys74/Cys113.

This sequence belongs to the plant LTP family.

Its function is as follows. Plant non-specific lipid-transfer proteins transfer phospholipids as well as galactolipids across membranes. May play a role in wax or cutin deposition in the cell walls of expanding epidermal cells and certain secretory tissues. The polypeptide is Non-specific lipid-transfer protein Lac s 1 (Lactuca sativa (Garden lettuce)).